The sequence spans 206 residues: Ion-translocating oxidoreductase complex subunit G (206 aa).

The helical transmembrane segment at 9 to 29 (GITLALFAAGSTGLTAVINQM) threads the bilayer. T174 carries the FMN phosphoryl threonine modification.

The protein belongs to the RnfG family. In terms of assembly, the complex is composed of six subunits: RsxA, RsxB, RsxC, RsxD, RsxE and RsxG. FMN serves as cofactor.

Its subcellular location is the cell inner membrane. In terms of biological role, part of a membrane-bound complex that couples electron transfer with translocation of ions across the membrane. Required to maintain the reduced state of SoxR. In Salmonella typhimurium (strain LT2 / SGSC1412 / ATCC 700720), this protein is Ion-translocating oxidoreductase complex subunit G.